A 165-amino-acid polypeptide reads, in one-letter code: Large ribosomal subunit protein uL11 (165 aa).

Residue S38 is modified to Phosphoserine. K40 participates in a covalent cross-link: Glycyl lysine isopeptide (Lys-Gly) (interchain with G-Cter in SUMO2). Residue K48 forms a Glycyl lysine isopeptide (Lys-Gly) (interchain with G-Cter in ubiquitin) linkage. N6-acetyllysine is present on K54. Residue K83 forms a Glycyl lysine isopeptide (Lys-Gly) (interchain with G-Cter in ubiquitin) linkage. The residue at position 165 (S165) is a Phosphoserine.

Belongs to the universal ribosomal protein uL11 family. In terms of assembly, component of the large ribosomal subunit. Mature ribosomes consist of a small (40S) and a large (60S) subunit. The 40S subunit contains about 33 different proteins and 1 molecule of RNA (18S). The 60S subunit contains about 49 different proteins and 3 molecules of RNA (28S, 5.8S and 5S). Post-translationally, ubiquitinated at Lys-48 and Lys-83 by RNF14 and RNF25 in response to ribosome collisions (ribosome stalling).

The protein localises to the cytoplasm. Its function is as follows. Component of the large ribosomal subunit. The ribosome is a large ribonucleoprotein complex responsible for the synthesis of proteins in the cell. Binds directly to 26S ribosomal RNA. This chain is Large ribosomal subunit protein uL11 (Rpl12), found in Mus musculus (Mouse).